The following is a 721-amino-acid chain: Polyribonucleotide nucleotidyltransferase (721 aa).

Mg(2+) contacts are provided by Asp495 and Asp501. In terms of domain architecture, KH spans 562–621 (PRLLSFRIDPELIGTVIGPGGRTIKNITERTNTKIDIEDSGIVTIASHDGAAAEEAQKII). Residues 631-699 (GEVFTGSITR…NRGRINLTLR (69 aa)) form the S1 motif domain. Residues 700–721 (GVPQSGESADSQPAPTPVAPLS) form a disordered region.

It belongs to the polyribonucleotide nucleotidyltransferase family. The cofactor is Mg(2+).

Its subcellular location is the cytoplasm. The catalysed reaction is RNA(n+1) + phosphate = RNA(n) + a ribonucleoside 5'-diphosphate. Involved in mRNA degradation. Catalyzes the phosphorolysis of single-stranded polyribonucleotides processively in the 3'- to 5'-direction. The protein is Polyribonucleotide nucleotidyltransferase of Synechococcus sp. (strain CC9311).